The chain runs to 155 residues: UPF0266 membrane protein lin0773 (155 aa).

3 helical membrane-spanning segments follow: residues 8–28 (IFLF…DAVI), 46–66 (RWDG…NTFF), and 70–90 (PFST…ICFF).

It belongs to the UPF0266 family.

Its subcellular location is the cell membrane. In Listeria innocua serovar 6a (strain ATCC BAA-680 / CLIP 11262), this protein is UPF0266 membrane protein lin0773.